The primary structure comprises 131 residues: Small ribosomal subunit protein eS6 (131 aa).

The interval 76 to 95 (APPGFKPKRKGERRRKTVRG) is disordered. The span at 81–93 (KPKRKGERRRKTV) shows a compositional bias: basic residues.

It belongs to the eukaryotic ribosomal protein eS6 family.

This Methanocaldococcus jannaschii (strain ATCC 43067 / DSM 2661 / JAL-1 / JCM 10045 / NBRC 100440) (Methanococcus jannaschii) protein is Small ribosomal subunit protein eS6.